Reading from the N-terminus, the 228-residue chain is Transmembrane protein 186 (228 aa).

Topologically, residues 1–93 are mitochondrial matrix; it reads MDMMMMSTRL…RGLRALSRLK (93 aa). The helical transmembrane segment at 94-112 threads the bilayer; it reads LLQTGITVVLLPTVYYLHL. Over 113–118 the chain is Mitochondrial intermembrane; that stretch reads QGQASV. The helical transmembrane segment at 119–141 threads the bilayer; the sequence is LVLNRSIGIALFAGVMLYSISHF. Topologically, residues 142–228 are mitochondrial matrix; it reads VRRVVGMMYL…AFGKVFGSLS (87 aa).

Belongs to the TMEM186 family.

It localises to the mitochondrion inner membrane. May be required for efficient assembly of the mitochondrial complex I. The sequence is that of Transmembrane protein 186 from Danio rerio (Zebrafish).